A 600-amino-acid chain; its full sequence is NADH-quinone oxidoreductase subunit C/D (600 aa).

Residues 1 to 190 (MVNNMTDLTA…SPFELTKAKQ (190 aa)) form an NADH dehydrogenase I subunit C region. The NADH dehydrogenase I subunit D stretch occupies residues 214-600 (DFMFLNLGPN…IDFVMSDVDR (387 aa)).

The protein in the N-terminal section; belongs to the complex I 30 kDa subunit family. This sequence in the C-terminal section; belongs to the complex I 49 kDa subunit family. NDH-1 is composed of 13 different subunits. Subunits NuoB, CD, E, F, and G constitute the peripheral sector of the complex.

It localises to the cell inner membrane. It carries out the reaction a quinone + NADH + 5 H(+)(in) = a quinol + NAD(+) + 4 H(+)(out). NDH-1 shuttles electrons from NADH, via FMN and iron-sulfur (Fe-S) centers, to quinones in the respiratory chain. The immediate electron acceptor for the enzyme in this species is believed to be ubiquinone. Couples the redox reaction to proton translocation (for every two electrons transferred, four hydrogen ions are translocated across the cytoplasmic membrane), and thus conserves the redox energy in a proton gradient. The sequence is that of NADH-quinone oxidoreductase subunit C/D from Escherichia coli (strain ATCC 8739 / DSM 1576 / NBRC 3972 / NCIMB 8545 / WDCM 00012 / Crooks).